Consider the following 521-residue polypeptide: MDKTASLTSQDAEKHDPDALRKERATDPPDLFEHGALDPVYQAKAHLIASAIQEIGMGKYQWGLFVVAGFGWFSDSVWPLMGSLILSPVVNEFQFNSPFLSLALNAGLLAGAIFWAFGCDIWGRRWSFNLSLLIAGAFGLAAGGTQNFVALACLFAVVGFGVGGNMPVDSAVFLDFVPGSYQYLLTILSIWWSIGQLVASLIAWPLIANFSCPIGSTTCTRADNMGWRYLLFTLGGMTLLLWAIRFFVFPLMESPRFLVGRGRDAEAIAVIQRIAQFNGRPSSLTLEELAMVAEKAAPKDAVATQRRQVLSQSSDFSTDHVKGLFATPKLAWSTSLLIALWGIIGLASTLYNSFLPFLLANRGAEFGDSSYFITYRNQVIIAVLGVPGAFLAGWAVEQPYLGRKGTLAISAGLTGVFLFATTTARSSNALLGWNCGYAFHSNIMYGVLYAISPEVFPAKDRGTGNGLTATATRVFGLIAPVIALYANLSTAVPVYVSGALIIASGAMALLLPYEPRGRASL.

Polar residues predominate over residues 1–10 (MDKTASLTSQ). A disordered region spans residues 1–29 (MDKTASLTSQDAEKHDPDALRKERATDPP). Basic and acidic residues predominate over residues 11–29 (DAEKHDPDALRKERATDPP). 5 helical membrane passes run 62–82 (WGLF…PLMG), 99–119 (FLSL…AFGC), 126–146 (WSFN…GGTQ), 148–168 (FVAL…NMPV), and 187–207 (ILSI…WPLI). The N-linked (GlcNAc...) asparagine glycan is linked to asparagine 209. The next 6 helical transmembrane spans lie at 229 to 249 (YLLF…FFVF), 330 to 350 (LAWS…ASTL), 379 to 399 (VIIA…VEQP), 404 to 424 (KGTL…TTTA), 431 to 451 (LGWN…LYAI), and 466 to 486 (GLTA…ALYA). An N-linked (GlcNAc...) asparagine glycan is attached at asparagine 487. Residues 491–511 (AVPVYVSGALIIASGAMALLL) form a helical membrane-spanning segment.

It belongs to the major facilitator superfamily.

It localises to the membrane. Major facilitator transporter probably involved in siderophore basidioferrin transmembrane transport. The sequence is that of MFS siderochrome iron transporter 1 from Ceriporiopsis subvermispora (strain B) (White-rot fungus).